The primary structure comprises 96 residues: Evasin P1074 (96 aa).

The N-terminal stretch at 1-28 (MAFNMITFLQMAVFVVILFNINLHSASA) is a signal peptide. 3 disulfides stabilise this stretch: cysteine 48–cysteine 67, cysteine 52–cysteine 69, and cysteine 63–cysteine 80. The N-linked (GlcNAc...) asparagine glycan is linked to asparagine 74.

It localises to the secreted. In terms of biological role, salivary chemokine-binding protein which binds to host chemokines CXCL1 and CXCL8. This Ixodes ricinus (Common tick) protein is Evasin P1074.